The primary structure comprises 120 residues: A-type ATP synthase subunit F (120 aa).

The protein belongs to the V-ATPase F subunit family. Has multiple subunits with at least A(3), B(3), C, D, E, F, H, I and proteolipid K(x).

It localises to the cell membrane. Functionally, component of the A-type ATP synthase that produces ATP from ADP in the presence of a proton gradient across the membrane. The sequence is that of A-type ATP synthase subunit F from Halobacterium salinarum (strain ATCC 29341 / DSM 671 / R1).